We begin with the raw amino-acid sequence, 279 residues long: MATH domain and coiled-coil domain-containing protein At1g31390 (279 aa).

The region spanning 6 to 134 (EKKITWTIKN…NGDVKIVVEV (129 aa)) is the MATH domain. Residues 235–271 (KLDWLEKKLKEVCEARVQEIDEEWKDLTDLKENWSSD) adopt a coiled-coil conformation.

The polypeptide is MATH domain and coiled-coil domain-containing protein At1g31390 (Arabidopsis thaliana (Mouse-ear cress)).